Here is a 110-residue protein sequence, read N- to C-terminus: U32-theraphotoxin-Cg1a (110 aa).

The signal sequence occupies residues 1 to 19; sequence MKHCFLILFTLIVFTVVWS. Residues 20–43 constitute a propeptide that is removed on maturation; the sequence is LEENEEYPDEDEMIESFMDGYSYR. Intrachain disulfides connect C49–C63, C56–C69, C60–C105, and C62–C80.

It belongs to the neurotoxin 03 (Tx2) family. 02 subfamily. In terms of tissue distribution, expressed by the venom gland.

The protein resides in the secreted. Probable ion channel inhibitor. In Chilobrachys guangxiensis (Chinese earth tiger tarantula), this protein is U32-theraphotoxin-Cg1a.